A 279-amino-acid polypeptide reads, in one-letter code: Ribosomal RNA large subunit methyltransferase E (279 aa).

Positions 1–10 (MSDDDQKPED) are enriched in basic and acidic residues. The interval 1 to 66 (MSDDDQKPED…MKKGGDARAA (66 aa)) is disordered. S-adenosyl-L-methionine is bound by residues G136, W138, D154, D170, and D194. K234 (proton acceptor) is an active-site residue.

Belongs to the class I-like SAM-binding methyltransferase superfamily. RNA methyltransferase RlmE family.

It is found in the cytoplasm. The enzyme catalyses uridine(2552) in 23S rRNA + S-adenosyl-L-methionine = 2'-O-methyluridine(2552) in 23S rRNA + S-adenosyl-L-homocysteine + H(+). In terms of biological role, specifically methylates the uridine in position 2552 of 23S rRNA at the 2'-O position of the ribose in the fully assembled 50S ribosomal subunit. This chain is Ribosomal RNA large subunit methyltransferase E, found in Maricaulis maris (strain MCS10) (Caulobacter maris).